Consider the following 263-residue polypeptide: Phosphate import ATP-binding protein PstB (263 aa).

The ABC transporter domain maps to 16–258; sequence VTARNVTVSY…PRDTRTQDYI (243 aa). 48-55 is an ATP binding site; that stretch reads GPSGCGKS.

This sequence belongs to the ABC transporter superfamily. Phosphate importer (TC 3.A.1.7) family. The complex is composed of two ATP-binding proteins (PstB), two transmembrane proteins (PstC and PstA) and a solute-binding protein (PstS).

It is found in the cell inner membrane. It carries out the reaction phosphate(out) + ATP + H2O = ADP + 2 phosphate(in) + H(+). Functionally, part of the ABC transporter complex PstSACB involved in phosphate import. Responsible for energy coupling to the transport system. The protein is Phosphate import ATP-binding protein PstB of Maricaulis maris (strain MCS10) (Caulobacter maris).